Here is a 1043-residue protein sequence, read N- to C-terminus: Isoleucine--tRNA ligase (1043 aa).

Residues P48 to H58 carry the 'HIGH' region motif. The 'KMSKS' region motif lies at K591 to R595. K594 contacts ATP.

This sequence belongs to the class-I aminoacyl-tRNA synthetase family. IleS type 2 subfamily. In terms of assembly, monomer. It depends on Zn(2+) as a cofactor.

It is found in the cytoplasm. The enzyme catalyses tRNA(Ile) + L-isoleucine + ATP = L-isoleucyl-tRNA(Ile) + AMP + diphosphate. Its function is as follows. Catalyzes the attachment of isoleucine to tRNA(Ile). As IleRS can inadvertently accommodate and process structurally similar amino acids such as valine, to avoid such errors it has two additional distinct tRNA(Ile)-dependent editing activities. One activity is designated as 'pretransfer' editing and involves the hydrolysis of activated Val-AMP. The other activity is designated 'posttransfer' editing and involves deacylation of mischarged Val-tRNA(Ile). This is Isoleucine--tRNA ligase from Chlamydia pneumoniae (Chlamydophila pneumoniae).